The sequence spans 200 residues: Pyridoxine/pyridoxamine 5'-phosphate oxidase (200 aa).

FMN-binding positions include 48-53, 63-64, Lys-70, and Gln-92; these read RMVLLK and YT. Position 53 (Lys-53) interacts with substrate. Substrate is bound by residues Tyr-110, Arg-114, and Ser-118. FMN-binding positions include 127 to 128 and Trp-171; that span reads QS. 177–179 lines the substrate pocket; sequence RLH. Arg-181 serves as a coordination point for FMN.

This sequence belongs to the pyridoxamine 5'-phosphate oxidase family. In terms of assembly, homodimer. The cofactor is FMN.

The enzyme catalyses pyridoxamine 5'-phosphate + O2 + H2O = pyridoxal 5'-phosphate + H2O2 + NH4(+). It catalyses the reaction pyridoxine 5'-phosphate + O2 = pyridoxal 5'-phosphate + H2O2. Its pathway is cofactor metabolism; pyridoxal 5'-phosphate salvage; pyridoxal 5'-phosphate from pyridoxamine 5'-phosphate: step 1/1. It participates in cofactor metabolism; pyridoxal 5'-phosphate salvage; pyridoxal 5'-phosphate from pyridoxine 5'-phosphate: step 1/1. In terms of biological role, catalyzes the oxidation of either pyridoxine 5'-phosphate (PNP) or pyridoxamine 5'-phosphate (PMP) into pyridoxal 5'-phosphate (PLP). The protein is Pyridoxine/pyridoxamine 5'-phosphate oxidase of Cereibacter sphaeroides (strain ATCC 17029 / ATH 2.4.9) (Rhodobacter sphaeroides).